We begin with the raw amino-acid sequence, 253 residues long: Ribulose bisphosphate carboxylase large chain (253 aa).

Asparagine 35 and threonine 85 together coordinate substrate. Residue lysine 87 is the Proton acceptor of the active site. Residue lysine 89 participates in substrate binding. Mg(2+)-binding residues include lysine 113, aspartate 115, and glutamate 116. An N6-carboxylysine modification is found at lysine 113. Histidine 206 serves as the catalytic Proton acceptor. Substrate contacts are provided by arginine 207 and histidine 239.

Belongs to the RuBisCO large chain family. Type I subfamily. As to quaternary structure, heterohexadecamer of 8 large chains and 8 small chains; disulfide-linked. The disulfide link is formed within the large subunit homodimers. Requires Mg(2+) as cofactor. Post-translationally, the disulfide bond which can form in the large chain dimeric partners within the hexadecamer appears to be associated with oxidative stress and protein turnover.

The protein localises to the plastid. Its subcellular location is the chloroplast. It carries out the reaction 2 (2R)-3-phosphoglycerate + 2 H(+) = D-ribulose 1,5-bisphosphate + CO2 + H2O. The enzyme catalyses D-ribulose 1,5-bisphosphate + O2 = 2-phosphoglycolate + (2R)-3-phosphoglycerate + 2 H(+). Its function is as follows. RuBisCO catalyzes two reactions: the carboxylation of D-ribulose 1,5-bisphosphate, the primary event in carbon dioxide fixation, as well as the oxidative fragmentation of the pentose substrate in the photorespiration process. Both reactions occur simultaneously and in competition at the same active site. The chain is Ribulose bisphosphate carboxylase large chain (rbcL) from Magnolia latahensis (Apocynophyllum latahense).